Reading from the N-terminus, the 381-residue chain is Cytochrome b (381 aa).

4 helical membrane passes run 34-54 (FGSL…FLAM), 78-99 (WLIR…YLHI), 114-134 (WNIG…GYVL), and 179-199 (FFAF…IHLL). Heme b contacts are provided by H84 and H98. Heme b contacts are provided by H183 and H197. H202 contacts a ubiquinone. Helical transmembrane passes span 227-247 (YKDL…ALFM), 289-309 (LGGV…PLLH), 321-341 (LTQI…WIGG), and 348-368 (FITV…IIMP).

Belongs to the cytochrome b family. As to quaternary structure, the cytochrome bc1 complex contains 3 respiratory subunits (MT-CYB, CYC1 and UQCRFS1), 2 core proteins (UQCRC1 and UQCRC2) and probably 6 low-molecular weight proteins. Requires heme b as cofactor.

It is found in the mitochondrion inner membrane. Component of the ubiquinol-cytochrome c reductase complex (complex III or cytochrome b-c1 complex) that is part of the mitochondrial respiratory chain. The b-c1 complex mediates electron transfer from ubiquinol to cytochrome c. Contributes to the generation of a proton gradient across the mitochondrial membrane that is then used for ATP synthesis. In Sphyrna tiburo tiburo (Hammerhead shark), this protein is Cytochrome b (mt-cyb).